A 65-amino-acid chain; its full sequence is Large ribosomal subunit protein bL35 (65 aa).

This sequence belongs to the bacterial ribosomal protein bL35 family.

The polypeptide is Large ribosomal subunit protein bL35 (Aeromonas hydrophila subsp. hydrophila (strain ATCC 7966 / DSM 30187 / BCRC 13018 / CCUG 14551 / JCM 1027 / KCTC 2358 / NCIMB 9240 / NCTC 8049)).